The chain runs to 243 residues: NAD-dependent protein deacetylase (243 aa).

The Deacetylase sirtuin-type domain occupies 1–243 (MRNDLETLKH…VSVVKSLMTE (243 aa)). 7 residues coordinate NAD(+): A24, F35, R36, Q105, I107, D108, and H123. Residue F35 coordinates nicotinamide. Positions 107 and 108 each coordinate nicotinamide. The Proton acceptor role is filled by H123. Zn(2+) is bound by residues C131, C134, C151, and C154. NAD(+)-binding residues include S192, S193, N215, and D232.

Belongs to the sirtuin family. Class U subfamily. Zn(2+) serves as cofactor.

The protein resides in the cytoplasm. It catalyses the reaction N(6)-acetyl-L-lysyl-[protein] + NAD(+) + H2O = 2''-O-acetyl-ADP-D-ribose + nicotinamide + L-lysyl-[protein]. In terms of biological role, NAD-dependent protein deacetylase which modulates the activities of several enzymes which are inactive in their acetylated form. This Staphylococcus aureus (strain Mu50 / ATCC 700699) protein is NAD-dependent protein deacetylase.